The chain runs to 1330 residues: pre-mRNA 3' end processing protein WDR33 (1330 aa).

Position 2 is an N-acetylalanine (Ala2). Ser7 bears the Phosphoserine mark. N6-acetyllysine is present on Lys46. WD repeat units follow at residues 117–156, 159–198, 200–239, 242–283, 286–325, 329–369, and 373–412; these read KVKC…FETI, AHDS…VKMF, AHKE…EERI, GHGA…SLAT, AHKN…EELQ, GHKK…EVGG, and AHEG…DKMR. Glycyl lysine isopeptide (Lys-Gly) (interchain with G-Cter in SUMO2) cross-links involve residues Lys526, Lys530, and Lys560. The tract at residues 566 to 1330 is disordered; that stretch reads QKQADQIQPP…GTSRGSGRGR (765 aa). The span at 588-607 shows a compositional bias: polar residues; it reads FSGQGPISQIPQGFQQPHPS. Residues 617 to 769 enclose the Collagen-like domain; that stretch reads GPPGPQGQFR…GPASQGIQGP (153 aa). A compositionally biased stretch (low complexity) spans 622 to 642; it reads QGQFRAPGPQGQMGPQGPPMH. A compositionally biased stretch (pro residues) spans 682–694; the sequence is PHGPLGPQGPPGP. 2 stretches are compositionally biased toward low complexity: residues 695 to 706 and 725 to 750; these read QGSSGPQGHMGP and QGHM…GMQG. Arg776 is subject to Omega-N-methylarginine. Positions 848–863 are enriched in low complexity; that stretch reads GPSGSQGQQGPPQGSL. Arg909 is modified (asymmetric dimethylarginine). The span at 926–935 shows a compositional bias: low complexity; the sequence is PGLGQQGAQG. Composition is skewed to basic and acidic residues over residues 965–983 and 992–1027; these read SERR…DRGP and GPPD…EFEG. Omega-N-methylarginine is present on Arg981. Omega-N-methylarginine is present on Arg1028. 2 stretches are compositionally biased toward basic and acidic residues: residues 1049–1061 and 1071–1115; these read PDHR…DGRG and EGRR…RGRD. Positions 1123 to 1133 are enriched in acidic residues; it reads FGPEEGFDASD. Composition is skewed to basic and acidic residues over residues 1134-1143, 1163-1211, and 1236-1253; these read EAARGRDLRG, EFPR…RERS, and SEHR…DRGS. At Ser1204 the chain carries Phosphoserine. Arg1256 is modified (omega-N-methylarginine). Basic and acidic residues predominate over residues 1275-1287; it reads DGDHHDGYHRDEP. Residues 1293-1323 show a composition bias toward low complexity; the sequence is GSSSSSRGARSGSNWGRGSNMNSGPPRRGTS. At Arg1309 the chain carries Asymmetric dimethylarginine; alternate. Arg1309 is modified (omega-N-methylarginine; alternate).

Belongs to the WD repeat WDR33 family. In terms of assembly, component of the cleavage and polyadenylation specificity factor (CPSF) module of the pre-mRNA 3'-end processing complex. Interacts with CPSF3/CPSF73. Most highly expressed in testis.

The protein resides in the nucleus. In terms of biological role, essential for both cleavage and polyadenylation of pre-mRNA 3' ends. The chain is pre-mRNA 3' end processing protein WDR33 (Wdr33) from Mus musculus (Mouse).